The sequence spans 122 residues: Large ribosomal subunit protein uL14 (122 aa).

It belongs to the universal ribosomal protein uL14 family. As to quaternary structure, part of the 50S ribosomal subunit. Forms a cluster with proteins L3 and L19. In the 70S ribosome, L14 and L19 interact and together make contacts with the 16S rRNA in bridges B5 and B8.

In terms of biological role, binds to 23S rRNA. Forms part of two intersubunit bridges in the 70S ribosome. This is Large ribosomal subunit protein uL14 from Desulforudis audaxviator (strain MP104C).